A 112-amino-acid chain; its full sequence is Nitrogen regulatory protein P-II (112 aa).

An O-UMP-tyrosine modification is found at Tyr51.

The protein belongs to the P(II) protein family. In terms of assembly, homotrimer.

Functionally, P-II indirectly controls the transcription of the glutamine synthetase gene (glnA). P-II prevents NR-II-catalyzed conversion of NR-I to NR-I-phosphate, the transcriptional activator of glnA. When P-II is uridylylated to P-II-UMP, these events are reversed. When the ratio of Gln to 2-ketoglutarate decreases, P-II is uridylylated to P-II-UMP, which causes the deadenylation of glutamine synthetase, so activating the enzyme. The sequence is that of Nitrogen regulatory protein P-II (glnB) from Rhodospirillum rubrum (strain ATCC 11170 / ATH 1.1.1 / DSM 467 / LMG 4362 / NCIMB 8255 / S1).